A 780-amino-acid polypeptide reads, in one-letter code: uncharacterized protein (780 aa).

The region spanning 10–80 is the BTB domain; that stretch reads NNNIIKLNIG…MRTGTFTLPY (71 aa).

This is an uncharacterized protein from Dictyostelium discoideum (Social amoeba).